The chain runs to 434 residues: Trigger factor (434 aa).

The 86-residue stretch at Glu161 to Pro246 folds into the PPIase FKBP-type domain.

This sequence belongs to the FKBP-type PPIase family. Tig subfamily.

The protein localises to the cytoplasm. It catalyses the reaction [protein]-peptidylproline (omega=180) = [protein]-peptidylproline (omega=0). Involved in protein export. Acts as a chaperone by maintaining the newly synthesized protein in an open conformation. Functions as a peptidyl-prolyl cis-trans isomerase. The polypeptide is Trigger factor (Yersinia pseudotuberculosis serotype O:1b (strain IP 31758)).